We begin with the raw amino-acid sequence, 364 residues long: Ribosomal RNA large subunit methyltransferase M (364 aa).

S-adenosyl-L-methionine contacts are provided by residues Ser-187, 220–223, Asp-239, Asp-259, and Asp-276; that span reads CPGG. Catalysis depends on Lys-305, which acts as the Proton acceptor.

The protein belongs to the class I-like SAM-binding methyltransferase superfamily. RNA methyltransferase RlmE family. RlmM subfamily. As to quaternary structure, monomer.

It localises to the cytoplasm. It catalyses the reaction cytidine(2498) in 23S rRNA + S-adenosyl-L-methionine = 2'-O-methylcytidine(2498) in 23S rRNA + S-adenosyl-L-homocysteine + H(+). Functionally, catalyzes the 2'-O-methylation at nucleotide C2498 in 23S rRNA. In Aeromonas salmonicida (strain A449), this protein is Ribosomal RNA large subunit methyltransferase M.